The following is a 98-amino-acid chain: Aspartyl/glutamyl-tRNA(Asn/Gln) amidotransferase subunit C (98 aa).

A disordered region spans residues 75 to 98; sequence EQALSGAPDSDDNRFKVPAILDEA.

It belongs to the GatC family. As to quaternary structure, heterotrimer of A, B and C subunits.

The catalysed reaction is L-glutamyl-tRNA(Gln) + L-glutamine + ATP + H2O = L-glutaminyl-tRNA(Gln) + L-glutamate + ADP + phosphate + H(+). The enzyme catalyses L-aspartyl-tRNA(Asn) + L-glutamine + ATP + H2O = L-asparaginyl-tRNA(Asn) + L-glutamate + ADP + phosphate + 2 H(+). Its function is as follows. Allows the formation of correctly charged Asn-tRNA(Asn) or Gln-tRNA(Gln) through the transamidation of misacylated Asp-tRNA(Asn) or Glu-tRNA(Gln) in organisms which lack either or both of asparaginyl-tRNA or glutaminyl-tRNA synthetases. The reaction takes place in the presence of glutamine and ATP through an activated phospho-Asp-tRNA(Asn) or phospho-Glu-tRNA(Gln). This Pseudarthrobacter chlorophenolicus (strain ATCC 700700 / DSM 12829 / CIP 107037 / JCM 12360 / KCTC 9906 / NCIMB 13794 / A6) (Arthrobacter chlorophenolicus) protein is Aspartyl/glutamyl-tRNA(Asn/Gln) amidotransferase subunit C.